The primary structure comprises 98 residues: Putative pterin-4-alpha-carbinolamine dehydratase (98 aa).

This sequence belongs to the pterin-4-alpha-carbinolamine dehydratase family.

The catalysed reaction is (4aS,6R)-4a-hydroxy-L-erythro-5,6,7,8-tetrahydrobiopterin = (6R)-L-erythro-6,7-dihydrobiopterin + H2O. In Roseobacter denitrificans (strain ATCC 33942 / OCh 114) (Erythrobacter sp. (strain OCh 114)), this protein is Putative pterin-4-alpha-carbinolamine dehydratase.